The primary structure comprises 182 residues: MNKLSTKLVVAIGIGAALYGILGLWGFSIAPNTFIKPALAILTVFGALFGPVAGLLIGLIGHTVTDTIAGWGIWWGWVISSGIIGFAMGFIQKRVGFSVKNGTYNKGDISYLAITGLIGIVIAIIFAGAFDIIVMGEPFDKIVIQVLGATIADVIVFLVLGLPITIGLAKSNKKHAHLKIEK.

5 consecutive transmembrane segments (helical) span residues 9 to 29, 40 to 60, 71 to 91, 114 to 134, and 142 to 162; these read VVAI…GFSI, AILT…IGLI, WGIW…MGFI, ITGL…DIIV, and IVIQ…VLGL.

It belongs to the UPF0397 family.

It localises to the cell membrane. This Bacillus cereus (strain Q1) protein is UPF0397 protein BCQ_2505.